We begin with the raw amino-acid sequence, 820 residues long: Nuclear pore complex protein Nup93 (820 aa).

This sequence belongs to the nucleoporin interacting component (NIC) family.

Its subcellular location is the nucleus membrane. It localises to the nucleus. It is found in the nuclear pore complex. Its function is as follows. Plays a role in the nuclear pore complex (NPC) assembly and/or maintenance. The chain is Nuclear pore complex protein Nup93 (nup93) from Xenopus laevis (African clawed frog).